Here is a 124-residue protein sequence, read N- to C-terminus: uncharacterized protein (124 aa).

Residues 70–90 (LLYLALVLLLVVILSTAFFSI) traverse the membrane as a helical segment.

It localises to the membrane. This is an uncharacterized protein from Saccharomyces cerevisiae (strain ATCC 204508 / S288c) (Baker's yeast).